The primary structure comprises 309 residues: MGTKIIGTGVYLPKNVLTNFDLEKIVDTSDEWITTRTGIKERRIAKEETITYMATQAAKEALREANLSPEELDLIILATLTPQKRFPSTACLVQAQLKAKGVYAFDISAACSGFIYALDIADSFIKSGKAKNVLVIGAEKLSEAVDWEDRSTCVLFGDGAGAVVVTRSEDKSDILATRMYAEGSLEELLHADNCGYIRMKGRELFKVAVRSMEEVCREVLEKAGVKPEEVSLVIPHQANVRIINALAEKLNIPKEKVFVNIQKYGNTSAASIPIALHEAIKEGKVKRGDLILMTAMGGGLTWGAVLLRY.

Residues C111 and H236 contribute to the active site. The ACP-binding stretch occupies residues 237 to 241; that stretch reads QANVR. N266 is an active-site residue.

It belongs to the thiolase-like superfamily. FabH family. In terms of assembly, homodimer.

The protein localises to the cytoplasm. The enzyme catalyses malonyl-[ACP] + acetyl-CoA + H(+) = 3-oxobutanoyl-[ACP] + CO2 + CoA. Its pathway is lipid metabolism; fatty acid biosynthesis. Its function is as follows. Catalyzes the condensation reaction of fatty acid synthesis by the addition to an acyl acceptor of two carbons from malonyl-ACP. Catalyzes the first condensation reaction which initiates fatty acid synthesis and may therefore play a role in governing the total rate of fatty acid production. Possesses both acetoacetyl-ACP synthase and acetyl transacylase activities. Its substrate specificity determines the biosynthesis of branched-chain and/or straight-chain of fatty acids. The protein is Beta-ketoacyl-[acyl-carrier-protein] synthase III of Aquifex aeolicus (strain VF5).